Here is a 556-residue protein sequence, read N- to C-terminus: Delta-1-pyrroline-5-carboxylate dehydrogenase, mitochondrial (556 aa).

The transit peptide at 1–17 (MLRARSAVSQSWKGFKT) directs the protein to the mitochondrion. NAD(+)-binding positions include K226 and 279 to 283 (GSVPT). Catalysis depends on E307, which acts as the Proton acceptor. The active-site Nucleophile is C341. NAD(+) is bound at residue E440. Residue S506 participates in substrate binding.

The protein belongs to the aldehyde dehydrogenase family.

It is found in the mitochondrion matrix. The catalysed reaction is L-glutamate 5-semialdehyde + NAD(+) + H2O = L-glutamate + NADH + 2 H(+). It functions in the pathway amino-acid degradation; L-proline degradation into L-glutamate; L-glutamate from L-proline: step 2/2. Irreversible conversion of delta-1-pyrroline-5-carboxylate (P5C), derived either from proline or ornithine, to glutamate. This is a necessary step in the pathway interconnecting the urea and tricarboxylic acid cycles. This is Delta-1-pyrroline-5-carboxylate dehydrogenase, mitochondrial (aldh4a1) from Danio rerio (Zebrafish).